The chain runs to 423 residues: AP-1 complex subunit mu-2 (423 aa).

The region spanning 168-421 (KNEVFIDVIE…ITQSGDYQLR (254 aa)) is the MHD domain.

Belongs to the adaptor complexes medium subunit family. As to quaternary structure, adaptor protein complex 1 (AP-1) is a heterotetramer composed of two large adaptins (gamma-type subunit AP1G1 and beta-type subunit AP1B1), a medium adaptin (mu-type subunit AP1M1 or AP1M2) and a small adaptin (sigma-type subunit AP1S1 or AP1S2 or AP1S3). Interacts with P2X4. Post-translationally, phosphorylation of membrane-bound AP1M1/AP1M2 increases its affinity for sorting signals.

It localises to the cytoplasmic vesicle. Its subcellular location is the clathrin-coated vesicle membrane. The protein localises to the golgi apparatus. Its function is as follows. Subunit of clathrin-associated adaptor protein complex 1 that plays a role in protein sorting in the trans-Golgi network (TGN) and endosomes. The AP complexes mediate the recruitment of clathrin to membranes and the recognition of sorting signals within the cytosolic tails of transmembrane cargo molecules. This chain is AP-1 complex subunit mu-2, found in Bos taurus (Bovine).